The primary structure comprises 223 residues: MNILTFGPNGSGKGTQGSLVKKKYNLAHIESGAIFREHIGGGTELGMKAKGYIDKGELVPDEITIPMILETLKAKGGNGWLLDGFPRNMVQAEKLWEALQKEGMKLDYVIEILLDRQIAKDRIMGRRLCANDPNHPNNIFIDAIKPNGDKCRVCGGDLKTRSDDQDEDAINKRHDIYYDTNTGTLAAAYFYKKLAGEGKTKYIELEGAGSIDSIKETLLSQLD.

ATP is bound at residue 10–15; the sequence is GSGKGT. The segment at 30–59 is NMP; the sequence is ESGAIFREHIGGGTELGMKAKGYIDKGELV. AMP contacts are provided by residues Ser-31, Arg-36, 57 to 59, 84 to 87, and Gln-91; these read ELV and GFPR. Residues 125–164 are LID; sequence GRRLCANDPNHPNNIFIDAIKPNGDKCRVCGGDLKTRSDD. Arg-126 contributes to the ATP binding site. Positions 161 and 173 each coordinate AMP. Gly-209 provides a ligand contact to ATP.

It belongs to the adenylate kinase family. Monomer.

The protein localises to the cytoplasm. It carries out the reaction AMP + ATP = 2 ADP. Its pathway is purine metabolism; AMP biosynthesis via salvage pathway; AMP from ADP: step 1/1. Functionally, catalyzes the reversible transfer of the terminal phosphate group between ATP and AMP. Plays an important role in cellular energy homeostasis and in adenine nucleotide metabolism. This chain is Adenylate kinase, found in Solidesulfovibrio magneticus (strain ATCC 700980 / DSM 13731 / RS-1) (Desulfovibrio magneticus).